Reading from the N-terminus, the 478-residue chain is Proline--tRNA ligase (478 aa).

Belongs to the class-II aminoacyl-tRNA synthetase family. ProS type 3 subfamily. In terms of assembly, homodimer.

The protein resides in the cytoplasm. It carries out the reaction tRNA(Pro) + L-proline + ATP = L-prolyl-tRNA(Pro) + AMP + diphosphate. Catalyzes the attachment of proline to tRNA(Pro) in a two-step reaction: proline is first activated by ATP to form Pro-AMP and then transferred to the acceptor end of tRNA(Pro). The chain is Proline--tRNA ligase from Clostridium botulinum (strain 657 / Type Ba4).